The sequence spans 95 residues: Aspartyl/glutamyl-tRNA(Asn/Gln) amidotransferase subunit C (95 aa).

The protein belongs to the GatC family. As to quaternary structure, heterotrimer of A, B and C subunits.

It catalyses the reaction L-glutamyl-tRNA(Gln) + L-glutamine + ATP + H2O = L-glutaminyl-tRNA(Gln) + L-glutamate + ADP + phosphate + H(+). The enzyme catalyses L-aspartyl-tRNA(Asn) + L-glutamine + ATP + H2O = L-asparaginyl-tRNA(Asn) + L-glutamate + ADP + phosphate + 2 H(+). In terms of biological role, allows the formation of correctly charged Asn-tRNA(Asn) or Gln-tRNA(Gln) through the transamidation of misacylated Asp-tRNA(Asn) or Glu-tRNA(Gln) in organisms which lack either or both of asparaginyl-tRNA or glutaminyl-tRNA synthetases. The reaction takes place in the presence of glutamine and ATP through an activated phospho-Asp-tRNA(Asn) or phospho-Glu-tRNA(Gln). This is Aspartyl/glutamyl-tRNA(Asn/Gln) amidotransferase subunit C from Thioalkalivibrio sulfidiphilus (strain HL-EbGR7).